We begin with the raw amino-acid sequence, 390 residues long: Transforming growth factor beta-1 proprotein (390 aa).

An N-terminal signal peptide occupies residues Met1–Gly29. A straightjacket domain region spans residues Leu30–Pro74. The tract at residues Glu75–Leu271 is arm domain. Asn82, Asn136, and Asn176 each carry an N-linked (GlcNAc...) asparagine glycan. The segment at Asp226–Asp252 is bowtie tail. Positions Arg244 to Asp246 match the Cell attachment site motif. Disulfide bonds link Cys285/Cys294, Cys293/Cys356, Cys322/Cys387, and Cys326/Cys389.

This sequence belongs to the TGF-beta family. In terms of assembly, homodimer; disulfide-linked. Interacts with the serine proteases, HTRA1 and HTRA3: the interaction with either inhibits TGFB1-mediated signaling and the HTRA protease activity is required for this inhibition. May interact with THSD4; this interaction may lead to sequestration by FBN1 microfibril assembly and attenuation of TGFB signaling. Interacts with CD109, DPT and ASPN. Interacts with EFEMP2. Interacts with TSKU; the interaction contributes to regulation of the hair cycle. Interacts with TGFBR3. Homodimer; disulfide-linked. Interacts with transforming growth factor beta-1 (TGF-beta-1) chain; interaction is non-covalent and maintains TGF-beta-1 in a latent state; each latency-associated peptide (LAP) monomer interacts with TGF-beta-1 in the other monomer. Interacts with LTBP1; leading to regulation of TGF-beta-1 activation. Interacts with LRRC32/GARP; leading to regulation of TGF-beta-1 activation on the surface of activated regulatory T-cells (Tregs). Interacts with LRRC33/NRROS; leading to regulation of TGF-beta-1 activation in macrophages and microglia. Interacts (via cell attachment site) with integrins ITGAV and ITGB6 (ITGAV:ITGB6), leading to release of the active TGF-beta-1. Interacts with NREP; the interaction results in a decrease in TGFB1 autoinduction. Interacts with HSP90AB1; inhibits latent TGFB1 activation. As to quaternary structure, homodimer; disulfide-linked. Interacts with TGF-beta receptors (TGFBR1 and TGFBR2), leading to signal transduction. Post-translationally, transforming growth factor beta-1 proprotein: The precursor proprotein is cleaved in the Golgi apparatus by FURIN to form Transforming growth factor beta-1 (TGF-beta-1) and Latency-associated peptide (LAP) chains, which remain non-covalently linked, rendering TGF-beta-1 inactive. N-glycosylated. Deglycosylation leads to activation of Transforming growth factor beta-1 (TGF-beta-1); mechanisms triggering deglycosylation-driven activation of TGF-beta-1 are however unclear. As to expression, expressed in cardiomyocytes. Weakly expressed in the mammary glands, with a slight increase of expression following onset of involution.

The protein localises to the secreted. The protein resides in the extracellular space. It localises to the extracellular matrix. Its function is as follows. Transforming growth factor beta-1 proprotein: Precursor of the Latency-associated peptide (LAP) and Transforming growth factor beta-1 (TGF-beta-1) chains, which constitute the regulatory and active subunit of TGF-beta-1, respectively. Required to maintain the Transforming growth factor beta-1 (TGF-beta-1) chain in a latent state during storage in extracellular matrix. Associates non-covalently with TGF-beta-1 and regulates its activation via interaction with 'milieu molecules', such as LTBP1, LRRC32/GARP and LRRC33/NRROS, that control activation of TGF-beta-1. Interaction with LRRC33/NRROS regulates activation of TGF-beta-1 in macrophages and microglia. Interaction with LRRC32/GARP controls activation of TGF-beta-1 on the surface of activated regulatory T-cells (Tregs). Interaction with integrins (ITGAV:ITGB6 or ITGAV:ITGB8) results in distortion of the Latency-associated peptide chain and subsequent release of the active TGF-beta-1. Functionally, multifunctional protein that regulates the growth and differentiation of various cell types and is involved in various processes, such as normal development, immune function, microglia function and responses to neurodegeneration. Activation into mature form follows different steps: following cleavage of the proprotein in the Golgi apparatus, Latency-associated peptide (LAP) and Transforming growth factor beta-1 (TGF-beta-1) chains remain non-covalently linked rendering TGF-beta-1 inactive during storage in extracellular matrix. At the same time, LAP chain interacts with 'milieu molecules', such as LTBP1, LRRC32/GARP and LRRC33/NRROS that control activation of TGF-beta-1 and maintain it in a latent state during storage in extracellular milieus. TGF-beta-1 is released from LAP by integrins (ITGAV:ITGB6 or ITGAV:ITGB8): integrin-binding to LAP stabilizes an alternative conformation of the LAP bowtie tail and results in distortion of the LAP chain and subsequent release of the active TGF-beta-1. Once activated following release of LAP, TGF-beta-1 acts by binding to TGF-beta receptors (TGFBR1 and TGFBR2), which transduce signal. While expressed by many cells types, TGF-beta-1 only has a very localized range of action within cell environment thanks to fine regulation of its activation by Latency-associated peptide chain (LAP) and 'milieu molecules'. Plays an important role in bone remodeling: acts as a potent stimulator of osteoblastic bone formation, causing chemotaxis, proliferation and differentiation in committed osteoblasts. Can promote either T-helper 17 cells (Th17) or regulatory T-cells (Treg) lineage differentiation in a concentration-dependent manner. At high concentrations, leads to FOXP3-mediated suppression of RORC and down-regulation of IL-17 expression, favoring Treg cell development. At low concentrations in concert with IL-6 and IL-21, leads to expression of the IL-17 and IL-23 receptors, favoring differentiation to Th17 cells. Stimulates sustained production of collagen through the activation of CREB3L1 by regulated intramembrane proteolysis (RIP). Mediates SMAD2/3 activation by inducing its phosphorylation and subsequent translocation to the nucleus. Positively regulates odontoblastic differentiation in dental papilla cells, via promotion of IPO7-mediated translocation of phosphorylated SMAD2 to the nucleus and subsequent transcription of target genes. Can induce epithelial-to-mesenchymal transition (EMT) and cell migration in various cell types. This chain is Transforming growth factor beta-1 proprotein, found in Mus musculus (Mouse).